Reading from the N-terminus, the 238-residue chain is Cysteine-rich venom protein (238 aa).

An N-terminal signal peptide occupies residues 1 to 19 (MIAFIVLLSLAAVLQQSSG). One can recognise an SCP domain in the interval 38–164 (VDKHNALRRS…STKYLYVCQY (127 aa)). Disulfide bonds link Cys75–Cys153, Cys92–Cys165, Cys148–Cys162, Cys184–Cys191, Cys187–Cys196, Cys200–Cys233, Cys209–Cys227, and Cys218–Cys231. The ShKT domain maps to 200-233 (CKYEDAFTNCNELAKETKCKTEWIKSKCPATCFC).

The protein belongs to the CRISP family. As to expression, expressed by the venom gland.

Its subcellular location is the secreted. Blocks olfactory (CNGA2) and retinal (CNGA1) CNG channel currents. Does not affect neither depolarization- nor caffeine-induced contraction of smooth muscle. The protein is Cysteine-rich venom protein of Drysdalia coronoides (White-lipped snake).